We begin with the raw amino-acid sequence, 295 residues long: Protease HtpX (295 aa).

2 helical membrane passes run 4–24 and 34–54; these read IVLF…ILSL and GLMI…LLMS. H139 provides a ligand contact to Zn(2+). E140 is a catalytic residue. H143 is a binding site for Zn(2+). The next 2 membrane-spanning stretches (helical) occupy residues 147–167 and 194–214; these read GDMV…IFIS and IVYM…ASII. Position 223 (E223) interacts with Zn(2+).

Belongs to the peptidase M48B family. It depends on Zn(2+) as a cofactor.

Its subcellular location is the cell inner membrane. This is Protease HtpX from Photorhabdus laumondii subsp. laumondii (strain DSM 15139 / CIP 105565 / TT01) (Photorhabdus luminescens subsp. laumondii).